The sequence spans 296 residues: MKMENFEYELKMAIEHILETNYPRKAFWHFDDLIDDLKSGIKAGDDAVVIKNMVINMEGPYPLKLGAKTALIHTACDVVAMGAEPKFALNAIQAKNEDEIKLAVDGLRKQSIGLNIPIIGGNTQTVEELKSCISVAVFGELIDENLIIKDGGAKDGDLLIMLGDPVEGDVGERIYKAKKKFDTYLEILENGIKINACKDASRGGWLGNLLEMLIKAKKGAEIKSLPYPRATRYLGTYIIAVPEEEYEKVVDIALKNKCPVVLFGRILEKPKLIIGTKEYISENKMLELIKKFPYKY.

It to Synechocystis PCC 6803 sll0787 and M.jannaschii MJ0640.

This is an uncharacterized protein from Methanocaldococcus jannaschii (strain ATCC 43067 / DSM 2661 / JAL-1 / JCM 10045 / NBRC 100440) (Methanococcus jannaschii).